An 87-amino-acid chain; its full sequence is Small ribosomal subunit protein bS20 (87 aa).

It belongs to the bacterial ribosomal protein bS20 family.

In terms of biological role, binds directly to 16S ribosomal RNA. The polypeptide is Small ribosomal subunit protein bS20 (Beijerinckia indica subsp. indica (strain ATCC 9039 / DSM 1715 / NCIMB 8712)).